Reading from the N-terminus, the 157-residue chain is 2-C-methyl-D-erythritol 2,4-cyclodiphosphate synthase (157 aa).

2 residues coordinate a divalent metal cation: aspartate 8 and histidine 10. 4-CDP-2-C-methyl-D-erythritol 2-phosphate is bound by residues 8 to 10 (DVH) and 34 to 35 (HS). Position 42 (histidine 42) interacts with a divalent metal cation. 4-CDP-2-C-methyl-D-erythritol 2-phosphate is bound by residues 56–58 (DIG), 61–65 (FPDTD), 132–135 (TTTE), phenylalanine 139, and arginine 142.

Belongs to the IspF family. In terms of assembly, homotrimer. It depends on a divalent metal cation as a cofactor.

The catalysed reaction is 4-CDP-2-C-methyl-D-erythritol 2-phosphate = 2-C-methyl-D-erythritol 2,4-cyclic diphosphate + CMP. The protein operates within isoprenoid biosynthesis; isopentenyl diphosphate biosynthesis via DXP pathway; isopentenyl diphosphate from 1-deoxy-D-xylulose 5-phosphate: step 4/6. Functionally, involved in the biosynthesis of isopentenyl diphosphate (IPP) and dimethylallyl diphosphate (DMAPP), two major building blocks of isoprenoid compounds. Catalyzes the conversion of 4-diphosphocytidyl-2-C-methyl-D-erythritol 2-phosphate (CDP-ME2P) to 2-C-methyl-D-erythritol 2,4-cyclodiphosphate (ME-CPP) with a corresponding release of cytidine 5-monophosphate (CMP). The polypeptide is 2-C-methyl-D-erythritol 2,4-cyclodiphosphate synthase (Geobacter metallireducens (strain ATCC 53774 / DSM 7210 / GS-15)).